Here is an 821-residue protein sequence, read N- to C-terminus: MVVSKVNKSLLSSVFKSRIRPTGESSIASGNKDIAGTSQAVKDLLSSKNSSSDLEEASLQDRVSKLLHVTTSDKSSLEKNLFLKIPSFTTKIPYDISLRTKELSRERKERRVYKQNGLSRRFAKIFRDSAQKLGTEAMFGAFDRVAKEMSVTEYNAMIGVYLEHAEKSNDLDYALGHIEKAFELLKSMRDRGFLIEERVYGPLLGYLIGMDMVDEFHSFKDVIREASPGSVERLGYYEMLLWIHLGDGEKIEELCSTIDGDNGESLSVLQENYLLALCKKDQKYHLERLLEIVDITKVRSSDLLANIFEYLGRFSLDSVASRFLWELRESDEGVKNVSDLISIYSTCTPNPTVEDTILKFNKMHEELDVMPSSTSYEKLVKYSCDSNEVVTALDVVEKMGEAGLMISADILHSLLHAIDEVLEFDLVRRIHSIMCTKSVKPNTENFRSIIRLCTRIKDFEGAYNMLGNLKNFNLEPNSSMFNCILAGYFREKNVSSALMVVKQMKEAGVKPDSITFGYLINNCTQEDAITKYYEEMKQAGVQATKRIYMSLIDAYAASGKFEKAKQVLVDPDVPAINQNELKSVLISALASRGKWADALHIYEEMRKAECHVDPKSIISLIEYSDSKGELSTLVQLADDLQDDTSWIDGFFRMILFAVRNKKSSDIVDLLKRNKVRLLKKGIPVEAHFDEVFWAIAETEPSKVHLGMDLLRFMKDELGFVPSRKCLDFLLHACVNAKDLEHGLLVWKEYQSAAFPCNVLSFLRMYQVLLAAGDSEGAKALVSKIPKDDKDVQHIIEESQSAFSQAPNKKKPKKKMIVLSTK.

The N-terminal 74 residues, 1-74 (MVVSKVNKSL…KLLHVTTSDK (74 aa)), are a transit peptide targeting the mitochondrion. 7 PPR repeats span residues 372–406 (SSTSYEKLVKYSCDSNEVVTALDVVEKMGEAGLMI), 407–441 (SADILHSLLHAIDEVLEFDLVRRIHSIMCTKSVKP), 442–476 (NTENFRSIIRLCTRIKDFEGAYNMLGNLKNFNLEP), 477–511 (NSSMFNCILAGYFREKNVSSALMVVKQMKEAGVKP), 512–542 (DSITFGYLINNCTQEDAITKYYEEMKQAGVQ), 544–574 (TKRIYMSLIDAYAASGKFEKAKQVLVDPDVP), and 578–612 (QNELKSVLISALASRGKWADALHIYEEMRKAECHV). The interval 801–821 (AFSQAPNKKKPKKKMIVLSTK) is disordered.

This sequence belongs to the PPR family. P subfamily.

Its subcellular location is the mitochondrion. This Arabidopsis thaliana (Mouse-ear cress) protein is Pentatricopeptide repeat-containing protein At4g04790, mitochondrial.